The primary structure comprises 443 residues: Xaa-Pro dipeptidase (443 aa).

Mn(2+) contacts are provided by aspartate 246, aspartate 257, histidine 339, glutamate 384, and glutamate 423.

It belongs to the peptidase M24B family. Bacterial-type prolidase subfamily. Mn(2+) is required as a cofactor.

It carries out the reaction Xaa-L-Pro dipeptide + H2O = an L-alpha-amino acid + L-proline. Splits dipeptides with a prolyl residue in the C-terminal position. The chain is Xaa-Pro dipeptidase from Salmonella paratyphi B (strain ATCC BAA-1250 / SPB7).